A 1305-amino-acid chain; its full sequence is Rho GTPase-activating protein 33 (1305 aa).

A disordered region spans residues M1–R64. A Phosphoserine modification is found at S32. The PX; atypical domain maps to F83–L192. In terms of domain architecture, SH3 spans P210–E272. The 196-residue stretch at C339 to F534 folds into the Rho-GAP domain. Disordered regions lie at residues R575–S818, L864–S1054, and S1115–C1305. The segment covering T582–P595 has biased composition (low complexity). S594 bears the Phosphoserine mark. Basic and acidic residues predominate over residues V596–R608. Residues S646–S669 are compositionally biased toward polar residues. A Phosphoserine modification is found at S660. Over residues A694–S733 the composition is skewed to low complexity. S749 carries the post-translational modification Phosphoserine. Pro residues predominate over residues P774–P786. Positions A787–P798 are enriched in low complexity. Polar residues predominate over residues L864 to S873. Positions L895–N915 are enriched in pro residues. Over residues P916 to Q940 the composition is skewed to low complexity. 3 stretches are compositionally biased toward polar residues: residues R992 to S1020, S1039 to S1054, and S1115 to P1125. The residue at position 1188 (Y1188) is a Phosphotyrosine. The span at G1194–P1208 shows a compositional bias: low complexity. R1263 is modified (omega-N-methylarginine). Over residues S1292–C1305 the composition is skewed to polar residues.

This sequence belongs to the PX domain-containing GAP family. In terms of assembly, specifically interacts with CDC42 and RHOQ/TC10 through its Rho-GAP domain. Interacts with NEK6. Highly expressed in brain and testis. Also expressed in white adipose tissue (WAT) and muscle at a low level.

It localises to the cell membrane. Functionally, may be involved in several stages of intracellular trafficking. Could play an important role in the regulation of glucose transport by insulin. May act as a downstream effector of RHOQ/TC10 in the regulation of insulin-stimulated glucose transport. The chain is Rho GTPase-activating protein 33 (Arhgap33) from Mus musculus (Mouse).